Consider the following 461-residue polypeptide: Spermidine coumaroyl-CoA acyltransferase (461 aa).

Residues histidine 168 and aspartate 393 each act as proton acceptor in the active site.

This sequence belongs to the plant acyltransferase family. As to quaternary structure, monomer. Mainly expressed in roots at low levels, specifically, in the root tip.

The enzyme catalyses 2 (E)-4-coumaroyl-CoA + spermidine = N(1),N(8)-bis(coumaroyl)-spermidine + 2 CoA + 2 H(+). Its pathway is amine and polyamine metabolism; spermidine metabolism. Its function is as follows. Spermidine coumaroyl-CoA acyltransferase that mediates the conversion of spermidine into dicoumaroyl-spermidine. In Arabidopsis thaliana (Mouse-ear cress), this protein is Spermidine coumaroyl-CoA acyltransferase.